The primary structure comprises 83 residues: Small ribosomal subunit protein bS16 (83 aa).

It belongs to the bacterial ribosomal protein bS16 family.

The polypeptide is Small ribosomal subunit protein bS16 (Ectopseudomonas mendocina (strain ymp) (Pseudomonas mendocina)).